We begin with the raw amino-acid sequence, 142 residues long: Nucleoside diphosphate kinase (142 aa).

ATP contacts are provided by Lys-11, Phe-59, Arg-87, Thr-93, Arg-104, and Asn-114. The Pros-phosphohistidine intermediate role is filled by His-117.

It belongs to the NDK family. It depends on Mg(2+) as a cofactor.

The protein localises to the cytoplasm. The enzyme catalyses a 2'-deoxyribonucleoside 5'-diphosphate + ATP = a 2'-deoxyribonucleoside 5'-triphosphate + ADP. The catalysed reaction is a ribonucleoside 5'-diphosphate + ATP = a ribonucleoside 5'-triphosphate + ADP. Its function is as follows. Major role in the synthesis of nucleoside triphosphates other than ATP. The ATP gamma phosphate is transferred to the NDP beta phosphate via a ping-pong mechanism, using a phosphorylated active-site intermediate. The polypeptide is Nucleoside diphosphate kinase (Hyperthermus butylicus (strain DSM 5456 / JCM 9403 / PLM1-5)).